A 237-amino-acid chain; its full sequence is Phosphoribosylaminoimidazole-succinocarboxamide synthase (237 aa).

Belongs to the SAICAR synthetase family.

It carries out the reaction 5-amino-1-(5-phospho-D-ribosyl)imidazole-4-carboxylate + L-aspartate + ATP = (2S)-2-[5-amino-1-(5-phospho-beta-D-ribosyl)imidazole-4-carboxamido]succinate + ADP + phosphate + 2 H(+). It functions in the pathway purine metabolism; IMP biosynthesis via de novo pathway; 5-amino-1-(5-phospho-D-ribosyl)imidazole-4-carboxamide from 5-amino-1-(5-phospho-D-ribosyl)imidazole-4-carboxylate: step 1/2. The sequence is that of Phosphoribosylaminoimidazole-succinocarboxamide synthase from Alteromonas mediterranea (strain DSM 17117 / CIP 110805 / LMG 28347 / Deep ecotype).